We begin with the raw amino-acid sequence, 473 residues long: Sensor histidine kinase GtrS (473 aa).

Over methionine 1–arginine 8 the chain is Cytoplasmic. A helical transmembrane segment spans residues methionine 9–leucine 29. Residues serine 30 to glutamine 197 are Periplasmic-facing. A helical membrane pass occupies residues valine 198–tryptophan 218. One can recognise an HAMP domain in the interval histidine 217–asparagine 269. Residues glutamine 219 to glutamate 473 are Cytoplasmic-facing. Positions alanine 277–glycine 471 constitute a Histidine kinase domain. Histidine 280 carries the phosphohistidine; by autocatalysis modification.

Autophosphorylated.

It is found in the cell inner membrane. It catalyses the reaction ATP + protein L-histidine = ADP + protein N-phospho-L-histidine.. Member of the two-component regulatory system GtrS/GltR involved in the regulation of glucose metabolism and transport, as well as regulation of the exotoxin A gene expression. GtrS recognizes and binds 2-ketogluconate and 6-phosphogluconate via its sensor domain, which accelerates GtrS autophosphorylation and concomitant transphosphorylation and regulation of the response regulator GltR. In terms of biological role, plays a key role during bacteria-host interactions and is required for optimal colonization and dissemination in a mouse model of infection. Contributes to modulation of the type III secretion system (T3SS) in response to host cells via the regulation of the OprB transport system. The sequence is that of Sensor histidine kinase GtrS from Pseudomonas aeruginosa (strain ATCC 15692 / DSM 22644 / CIP 104116 / JCM 14847 / LMG 12228 / 1C / PRS 101 / PAO1).